We begin with the raw amino-acid sequence, 264 residues long: ATP synthase subunit a (264 aa).

Helical transmembrane passes span Thr29–Phe49, Val89–Met109, Asp134–Ile154, Ile177–Leu197, Leu208–Val228, and Leu235–Val255.

The protein belongs to the ATPase A chain family. In terms of assembly, F-type ATPases have 2 components, CF(1) - the catalytic core - and CF(0) - the membrane proton channel. CF(1) has five subunits: alpha(3), beta(3), gamma(1), delta(1), epsilon(1). CF(0) has three main subunits: a(1), b(2) and c(9-12). The alpha and beta chains form an alternating ring which encloses part of the gamma chain. CF(1) is attached to CF(0) by a central stalk formed by the gamma and epsilon chains, while a peripheral stalk is formed by the delta and b chains.

The protein localises to the cell inner membrane. In terms of biological role, key component of the proton channel; it plays a direct role in the translocation of protons across the membrane. The protein is ATP synthase subunit a of Shewanella sediminis (strain HAW-EB3).